The sequence spans 488 residues: E3 ubiquitin-protein ligase RNF8 (488 aa).

The region spanning 38–92 (VTIGRGLSVTYQLISKVCPLMISRSHCVLKQNPEGQWTIMDNKSLNGVWLNRERL) is the FHA domain. The required for interaction with PIWIL1 stretch occupies residues 68–72 (QNPEG). Residues 141–164 (DQRMEKHKGSRTKRKFSSPGLENL) form a disordered region. The span at 145–156 (EKHKGSRTKRKF) shows a compositional bias: basic residues. Serine 157 is modified (phosphoserine). The RING-type zinc-finger motif lies at 406–444 (CIICSEYFIEAVTLNCAHSFCSFCINEWMKRKVECPICR).

The protein belongs to the RNF8 family. As to quaternary structure, homodimer. Forms a E2-E3 ubiquitin ligase complex composed of the RNF8 homodimer and a E2 heterodimer of UBE2N and UBE2V2. Interacts with class III E2s, including UBE2E1, UBE2E2, and UBE2E3 and with UBE2N. Interacts with RXRA. Interacts (via FHA domain) with ATM-phosphorylated MDC1. Interacts (via FHA domain) with 'Thr-4829' phosphorylated HERC2 (via C-terminus). Interacts with PIWIL1; leading to sequester RNF8 in the cytoplasm. Interacts with WRAP53/TCAB1. (Microbial infection) May interact with the L.monocytogenes protein actA; however, given these errors in the sequence (AJ242721), the relevance of the interaction with actA remains to be confirmed. In terms of processing, autoubiquitinated through 'Lys-48' and 'Lys-63' of ubiquitin. 'Lys-63' polyubiquitination is mediated by UBE2N. 'Lys-29'-type polyubiquitination is also observed, but it doesn't require its own functional RING-type zinc finger.

It is found in the nucleus. It localises to the cytoplasm. Its subcellular location is the midbody. The protein resides in the chromosome. The protein localises to the telomere. It catalyses the reaction S-ubiquitinyl-[E2 ubiquitin-conjugating enzyme]-L-cysteine + [acceptor protein]-L-lysine = [E2 ubiquitin-conjugating enzyme]-L-cysteine + N(6)-ubiquitinyl-[acceptor protein]-L-lysine.. It functions in the pathway protein modification; protein ubiquitination. Functionally, E3 ubiquitin-protein ligase that plays a key role in DNA damage signaling via 2 distinct roles: by mediating the 'Lys-63'-linked ubiquitination of histones H2A and H2AX and promoting the recruitment of DNA repair proteins at double-strand breaks (DSBs) sites, and by catalyzing 'Lys-48'-linked ubiquitination to remove target proteins from DNA damage sites. Following DNA DSBs, it is recruited to the sites of damage by ATM-phosphorylated MDC1 and catalyzes the 'Lys-63'-linked ubiquitination of histones H2A and H2AX, thereby promoting the formation of TP53BP1 and BRCA1 ionizing radiation-induced foci (IRIF). Also controls the recruitment of UIMC1-BRCC3 (RAP80-BRCC36) and PAXIP1/PTIP to DNA damage sites. Promotes the recruitment of NBN to DNA damage sites by catalyzing 'Lys-6'-linked ubiquitination of NBN. Also recruited at DNA interstrand cross-links (ICLs) sites and catalyzes 'Lys-63'-linked ubiquitination of histones H2A and H2AX, leading to recruitment of FAAP20 and Fanconi anemia (FA) complex, followed by interstrand cross-link repair. H2A ubiquitination also mediates the ATM-dependent transcriptional silencing at regions flanking DSBs in cis, a mechanism to avoid collision between transcription and repair intermediates. Promotes the formation of 'Lys-63'-linked polyubiquitin chains via interactions with the specific ubiquitin-conjugating UBE2N/UBC13 and ubiquitinates non-histone substrates such as PCNA. Substrates that are polyubiquitinated at 'Lys-63' are usually not targeted for degradation. Also catalyzes the formation of 'Lys-48'-linked polyubiquitin chains via interaction with the ubiquitin-conjugating UBE2L6/UBCH8, leading to degradation of substrate proteins such as CHEK2, JMJD2A/KDM4A and KU80/XRCC5: it is still unclear how the preference toward 'Lys-48'- versus 'Lys-63'-linked ubiquitination is regulated but it could be due to RNF8 ability to interact with specific E2 specific ligases. For instance, interaction with phosphorylated HERC2 promotes the association between RNF8 and UBE2N/UBC13 and favors the specific formation of 'Lys-63'-linked ubiquitin chains. Promotes non-homologous end joining (NHEJ) by promoting the 'Lys-48'-linked ubiquitination and degradation the of KU80/XRCC5. Following DNA damage, mediates the ubiquitination and degradation of JMJD2A/KDM4A in collaboration with RNF168, leading to unmask H4K20me2 mark and promote the recruitment of TP53BP1 at DNA damage sites. Following DNA damage, mediates the ubiquitination and degradation of POLD4/p12, a subunit of DNA polymerase delta. In the absence of POLD4, DNA polymerase delta complex exhibits higher proofreading activity. In addition to its function in damage signaling, also plays a role in higher-order chromatin structure by mediating extensive chromatin decondensation. Involved in the activation of ATM by promoting histone H2B ubiquitination, which indirectly triggers histone H4 'Lys-16' acetylation (H4K16ac), establishing a chromatin environment that promotes efficient activation of ATM kinase. Required in the testis, where it plays a role in the replacement of histones during spermatogenesis. At uncapped telomeres, promotes the joining of deprotected chromosome ends by inducing H2A ubiquitination and TP53BP1 recruitment, suggesting that it may enhance cancer development by aggravating telomere-induced genome instability in case of telomeric crisis. Promotes the assembly of RAD51 at DNA DSBs in the absence of BRCA1 and TP53BP1 Also involved in class switch recombination in immune system, via its role in regulation of DSBs repair. May be required for proper exit from mitosis after spindle checkpoint activation and may regulate cytokinesis. May play a role in the regulation of RXRA-mediated transcriptional activity. Not involved in RXRA ubiquitination by UBE2E2. The polypeptide is E3 ubiquitin-protein ligase RNF8 (Mus musculus (Mouse)).